Reading from the N-terminus, the 593-residue chain is Lipolysis-stimulated lipoprotein receptor (593 aa).

Residues M1–S35 form the signal peptide. Over A36 to D206 the chain is Extracellular. Positions P89 to A181 constitute an Ig-like V-type domain. A disulfide bridge links C113 with C165. The helical transmembrane segment at W207 to C227 threads the bilayer. Over W228–V593 the chain is Cytoplasmic. Position 283 is a phosphothreonine (T283). 5 positions are modified to phosphoserine: S308, S314, S332, S375, and S379. Residues S375–S387 show a composition bias toward basic and acidic residues. A disordered region spans residues S375–R578. T396 bears the Phosphothreonine mark. S407, S410, and S436 each carry phosphoserine. Positions R435 to N444 are enriched in basic and acidic residues. The span at R445–G460 shows a compositional bias: low complexity. Residues S471 and S473 each carry the phosphoserine modification. Residues R472–R550 show a composition bias toward basic and acidic residues. The residue at position 478 (Y478) is a Phosphotyrosine. A Phosphoserine modification is found at S575. K582 is covalently cross-linked (Glycyl lysine isopeptide (Lys-Gly) (interchain with G-Cter in ubiquitin)). S587 and S590 each carry phosphoserine.

The protein belongs to the immunoglobulin superfamily. LISCH7 family. As to quaternary structure, homotrimer or homotetramer constituted of isoform 1 and/or isoform 2 and isoform 3. Assembles into cell-cell contacts. Interacts (via the cytoplasmic domain) with MARVELD2 (via C-terminal cytoplasmic domain); the interaction is required to recruit MARVELD2 to tricellular contacts. Interacts with OCLN. In terms of processing, phosphorylation at Ser-308 by MAPK8/JNK1 and MAPK9/JNK2 may be required for exclusive localization at tricellular tight junstions. Polyubiquitinated at Lys-582 via 'Lys-63'-linked ubiquitin chains; deubiquitinated by USP53. Specifically expressed in liver. Also detected in kidney and lung.

The protein localises to the cell membrane. Its subcellular location is the cell junction. It is found in the tight junction. In terms of biological role, probable role in the clearance of triglyceride-rich lipoprotein from blood. Binds chylomicrons, LDL and VLDL in presence of free fatty acids and allows their subsequent uptake in the cells. Maintains epithelial barrier function by recruiting MARVELD2/tricellulin to tricellular tight junctions. This Rattus norvegicus (Rat) protein is Lipolysis-stimulated lipoprotein receptor.